The chain runs to 242 residues: Putative ABC transporter ATP-binding protein TTE0246 (242 aa).

In terms of domain architecture, ABC transporter spans 5–242 (FELKNVSYFY…EKLLLKANLI (238 aa)). Position 38–45 (38–45 (GANGSGKS)) interacts with ATP.

This sequence belongs to the ABC transporter superfamily.

The protein localises to the cell membrane. Probably part of an ABC transporter complex. Responsible for energy coupling to the transport system. This is Putative ABC transporter ATP-binding protein TTE0246 from Caldanaerobacter subterraneus subsp. tengcongensis (strain DSM 15242 / JCM 11007 / NBRC 100824 / MB4) (Thermoanaerobacter tengcongensis).